We begin with the raw amino-acid sequence, 373 residues long: Flagellar P-ring protein (373 aa).

The first 30 residues, 1 to 30 (MTNRWSFDVKKNLVTLILTWLCLSISTAQA), serve as a signal peptide directing secretion.

Belongs to the FlgI family. The basal body constitutes a major portion of the flagellar organelle and consists of four rings (L,P,S, and M) mounted on a central rod.

It localises to the periplasm. The protein resides in the bacterial flagellum basal body. Assembles around the rod to form the L-ring and probably protects the motor/basal body from shearing forces during rotation. The chain is Flagellar P-ring protein from Aliivibrio salmonicida (strain LFI1238) (Vibrio salmonicida (strain LFI1238)).